The sequence spans 689 residues: Glycine--tRNA ligase beta subunit (689 aa).

It belongs to the class-II aminoacyl-tRNA synthetase family. As to quaternary structure, tetramer of two alpha and two beta subunits.

Its subcellular location is the cytoplasm. The catalysed reaction is tRNA(Gly) + glycine + ATP = glycyl-tRNA(Gly) + AMP + diphosphate. This chain is Glycine--tRNA ligase beta subunit, found in Glaesserella parasuis serovar 5 (strain SH0165) (Haemophilus parasuis).